The primary structure comprises 445 residues: Proline--tRNA ligase (445 aa).

Belongs to the class-II aminoacyl-tRNA synthetase family. ProS type 2 subfamily. As to quaternary structure, homodimer.

The protein localises to the cytoplasm. The enzyme catalyses tRNA(Pro) + L-proline + ATP = L-prolyl-tRNA(Pro) + AMP + diphosphate. In terms of biological role, catalyzes the attachment of proline to tRNA(Pro) in a two-step reaction: proline is first activated by ATP to form Pro-AMP and then transferred to the acceptor end of tRNA(Pro). The sequence is that of Proline--tRNA ligase from Dinoroseobacter shibae (strain DSM 16493 / NCIMB 14021 / DFL 12).